The primary structure comprises 113 residues: HIG1 domain-containing protein C25B8.07c, mitochondrial (113 aa).

Residues 1-27 (MSSKLPKKSEENLELPTFPASEESLSR) form a disordered region. The HIG1 domain maps to 12–103 (NLELPTFPAS…PPRREAPSNS (92 aa)). 2 helical membrane passes run 39–59 (PFIPLGCLMTVGTFLASGYYI) and 75–95 (VMSQGFTLAALAFSVLFIGPP).

It is found in the mitochondrion membrane. In Schizosaccharomyces pombe (strain 972 / ATCC 24843) (Fission yeast), this protein is HIG1 domain-containing protein C25B8.07c, mitochondrial.